Consider the following 785-residue polypeptide: Leucyl aminopeptidase (785 aa).

Residues E106 and 238 to 242 (GAMEN) contribute to the substrate site. Position 273 (H273) interacts with Zn(2+). The active-site Proton acceptor is E274. H277 and E296 together coordinate Zn(2+).

It belongs to the peptidase M1 family. In terms of assembly, co-immunoprecipitates with the 60 kDa chaperonin. Zn(2+) is required as a cofactor. Can be phosphorylated by cell extracts.

The protein resides in the cytoplasm. It carries out the reaction Release of an N-terminal amino acid, Xaa-|-Yaa-, in which Xaa is preferably Leu, but may be other amino acids including Pro although not Arg or Lys, and Yaa may be Pro. Amino acid amides and methyl esters are also readily hydrolyzed, but rates on arylamides are exceedingly low.. Its function is as follows. Preferentially acts as a leucyl-aminopeptidase, although it also has activity against other substrates. The sequence is that of Leucyl aminopeptidase (ape2) from Saccharolobus solfataricus (strain ATCC 35092 / DSM 1617 / JCM 11322 / P2) (Sulfolobus solfataricus).